The following is a 366-amino-acid chain: Alanine racemase (366 aa).

Catalysis depends on Lys33, which acts as the Proton acceptor; specific for D-alanine. The residue at position 33 (Lys33) is an N6-(pyridoxal phosphate)lysine. Arg129 lines the substrate pocket. Residue Tyr253 is the Proton acceptor; specific for L-alanine of the active site. Met301 is a binding site for substrate.

This sequence belongs to the alanine racemase family. Pyridoxal 5'-phosphate serves as cofactor.

The catalysed reaction is L-alanine = D-alanine. It functions in the pathway amino-acid biosynthesis; D-alanine biosynthesis; D-alanine from L-alanine: step 1/1. In terms of biological role, catalyzes the interconversion of L-alanine and D-alanine. May also act on other amino acids. In Xanthomonas oryzae pv. oryzae (strain MAFF 311018), this protein is Alanine racemase (alr).